A 355-amino-acid polypeptide reads, in one-letter code: UDP-N-acetylglucosamine--N-acetylmuramyl-(pentapeptide) pyrophosphoryl-undecaprenol N-acetylglucosamine transferase (355 aa).

UDP-N-acetyl-alpha-D-glucosamine-binding positions include 13-15 (TGG), asparagine 125, arginine 162, serine 190, isoleucine 244, and glutamine 289.

Belongs to the glycosyltransferase 28 family. MurG subfamily.

It is found in the cell inner membrane. It carries out the reaction di-trans,octa-cis-undecaprenyl diphospho-N-acetyl-alpha-D-muramoyl-L-alanyl-D-glutamyl-meso-2,6-diaminopimeloyl-D-alanyl-D-alanine + UDP-N-acetyl-alpha-D-glucosamine = di-trans,octa-cis-undecaprenyl diphospho-[N-acetyl-alpha-D-glucosaminyl-(1-&gt;4)]-N-acetyl-alpha-D-muramoyl-L-alanyl-D-glutamyl-meso-2,6-diaminopimeloyl-D-alanyl-D-alanine + UDP + H(+). It participates in cell wall biogenesis; peptidoglycan biosynthesis. Functionally, cell wall formation. Catalyzes the transfer of a GlcNAc subunit on undecaprenyl-pyrophosphoryl-MurNAc-pentapeptide (lipid intermediate I) to form undecaprenyl-pyrophosphoryl-MurNAc-(pentapeptide)GlcNAc (lipid intermediate II). The sequence is that of UDP-N-acetylglucosamine--N-acetylmuramyl-(pentapeptide) pyrophosphoryl-undecaprenol N-acetylglucosamine transferase from Neisseria meningitidis serogroup C / serotype 2a (strain ATCC 700532 / DSM 15464 / FAM18).